Reading from the N-terminus, the 600-residue chain is NADPH-dependent diflavin oxidoreductase 1 (600 aa).

Positions 6–150 (LLILYGSQTG…VVDPWLKDLW (145 aa)) constitute a Flavodoxin-like domain. FMN is bound by residues 12–17 (SQTGTA), 59–62 (ATTG), 97–106 (LGDSSYPKFN), and D132. In terms of domain architecture, FAD-binding FR-type spans 210-449 (IHPFLAPVLS…WVKKGSMKFP (240 aa)). FAD-binding positions include R354, 386–389 (RAFS), and 420–423 (GLCS). Residues T463, 518–519 (SR), and 524–528 (KIYVQ) contribute to the NADP(+) site. Position 599 (W599) interacts with FAD.

Belongs to the NADPH-dependent diflavin oxidoreductase NDOR1 family. The protein in the N-terminal section; belongs to the flavodoxin family. It in the C-terminal section; belongs to the flavoprotein pyridine nucleotide cytochrome reductase family. Interacts with ciapin1; as part of the cytosolic iron-sulfur (Fe-S) protein assembly (CIA) machinery. Requires FAD as cofactor. The cofactor is FMN.

It localises to the cytoplasm. The protein localises to the perinuclear region. The enzyme catalyses 2 oxidized [2Fe-2S]-[protein] + NADPH = 2 reduced [2Fe-2S]-[protein] + NADP(+) + H(+). NADPH-dependent reductase which is a central component of the cytosolic iron-sulfur (Fe-S) protein assembly (CIA) machinery. Transfers electrons from NADPH via its FAD and FMN prosthetic groups to the [2Fe-2S] cluster of ciapin1, another key component of the CIA machinery. In turn, this reduced cluster provides electrons for assembly of cytosolic iron-sulfur cluster proteins. It can also reduce the [2Fe-2S] cluster of cisd1 and activate this protein implicated in Fe/S cluster repair. The sequence is that of NADPH-dependent diflavin oxidoreductase 1 from Xenopus laevis (African clawed frog).